A 320-amino-acid chain; its full sequence is Aspartate carbamoyltransferase catalytic subunit (320 aa).

Carbamoyl phosphate contacts are provided by Arg65 and Thr66. Lys93 serves as a coordination point for L-aspartate. Carbamoyl phosphate is bound by residues Arg115, His143, and Gln146. Residues Arg176 and Arg230 each contribute to the L-aspartate site. Positions 271 and 272 each coordinate carbamoyl phosphate.

The protein belongs to the aspartate/ornithine carbamoyltransferase superfamily. ATCase family. In terms of assembly, heterododecamer (2C3:3R2) of six catalytic PyrB chains organized as two trimers (C3), and six regulatory PyrI chains organized as three dimers (R2).

It carries out the reaction carbamoyl phosphate + L-aspartate = N-carbamoyl-L-aspartate + phosphate + H(+). The protein operates within pyrimidine metabolism; UMP biosynthesis via de novo pathway; (S)-dihydroorotate from bicarbonate: step 2/3. Its function is as follows. Catalyzes the condensation of carbamoyl phosphate and aspartate to form carbamoyl aspartate and inorganic phosphate, the committed step in the de novo pyrimidine nucleotide biosynthesis pathway. The chain is Aspartate carbamoyltransferase catalytic subunit from Maricaulis maris (strain MCS10) (Caulobacter maris).